The following is a 774-amino-acid chain: 5-methyltetrahydropteroyltriglutamate--homocysteine methyltransferase (774 aa).

5-methyltetrahydropteroyltri-L-glutamate is bound by residues 15–18 (RELK) and Lys-116. L-homocysteine-binding positions include 445 to 447 (IGS) and Glu-498. L-methionine-binding positions include 445–447 (IGS) and Glu-498. Residues 529–530 (RC) and Trp-575 each bind 5-methyltetrahydropteroyltri-L-glutamate. Asp-613 serves as a coordination point for L-homocysteine. Asp-613 provides a ligand contact to L-methionine. Glu-619 provides a ligand contact to 5-methyltetrahydropteroyltri-L-glutamate. Residues His-655, Cys-657, and Glu-679 each coordinate Zn(2+). His-708 serves as the catalytic Proton donor. Position 740 (Cys-740) interacts with Zn(2+).

It belongs to the vitamin-B12 independent methionine synthase family. It depends on Zn(2+) as a cofactor.

It catalyses the reaction 5-methyltetrahydropteroyltri-L-glutamate + L-homocysteine = tetrahydropteroyltri-L-glutamate + L-methionine. The protein operates within amino-acid biosynthesis; L-methionine biosynthesis via de novo pathway; L-methionine from L-homocysteine (MetE route): step 1/1. Its function is as follows. Catalyzes the transfer of a methyl group from 5-methyltetrahydrofolate to homocysteine resulting in methionine formation. This Flavobacterium johnsoniae (strain ATCC 17061 / DSM 2064 / JCM 8514 / BCRC 14874 / CCUG 350202 / NBRC 14942 / NCIMB 11054 / UW101) (Cytophaga johnsonae) protein is 5-methyltetrahydropteroyltriglutamate--homocysteine methyltransferase.